A 424-amino-acid polypeptide reads, in one-letter code: Protein CLP1 homolog (424 aa).

ATP is bound by residues Glu-19, Lys-60, and 122 to 127 (DVGKST).

Belongs to the Clp1 family. Clp1 subfamily.

It localises to the nucleus. Required for endonucleolytic cleavage during polyadenylation-dependent pre-mRNA 3'-end formation. The polypeptide is Protein CLP1 homolog (cbc) (Aedes aegypti (Yellowfever mosquito)).